We begin with the raw amino-acid sequence, 736 residues long: Meiotic expression up-regulated protein 27 (736 aa).

This sequence belongs to the UPF0300 family.

The polypeptide is Meiotic expression up-regulated protein 27 (meu27) (Schizosaccharomyces pombe (strain 972 / ATCC 24843) (Fission yeast)).